Consider the following 208-residue polypeptide: FMN-dependent NADH:quinone oxidoreductase 4 (208 aa).

The protein belongs to the azoreductase type 1 family. As to quaternary structure, homodimer. FMN serves as cofactor.

The catalysed reaction is 2 a quinone + NADH + H(+) = 2 a 1,4-benzosemiquinone + NAD(+). It carries out the reaction N,N-dimethyl-1,4-phenylenediamine + anthranilate + 2 NAD(+) = 2-(4-dimethylaminophenyl)diazenylbenzoate + 2 NADH + 2 H(+). Its function is as follows. Quinone reductase that provides resistance to thiol-specific stress caused by electrophilic quinones. In terms of biological role, also exhibits azoreductase activity. Catalyzes the reductive cleavage of the azo bond in aromatic azo compounds to the corresponding amines. The protein is FMN-dependent NADH:quinone oxidoreductase 4 of Bacillus anthracis.